The primary structure comprises 436 residues: tRNA-2-methylthio-N(6)-dimethylallyladenosine synthase (436 aa).

In terms of domain architecture, MTTase N-terminal spans 5-120 (KKLFIQTLGC…IKDVVDVKGA (116 aa)). [4Fe-4S] cluster is bound by residues Cys14, Cys51, Cys83, Cys152, Cys156, and Cys159. In terms of domain architecture, Radical SAM core spans 138–372 (KTNKYRASVN…IELHKRYLEE (235 aa)). Residues 375-436 (PKLIGETLNI…RTSLKGEVVN (62 aa)) form the TRAM domain.

This sequence belongs to the methylthiotransferase family. MiaB subfamily. Monomer. It depends on [4Fe-4S] cluster as a cofactor.

Its subcellular location is the cytoplasm. The enzyme catalyses N(6)-dimethylallyladenosine(37) in tRNA + (sulfur carrier)-SH + AH2 + 2 S-adenosyl-L-methionine = 2-methylsulfanyl-N(6)-dimethylallyladenosine(37) in tRNA + (sulfur carrier)-H + 5'-deoxyadenosine + L-methionine + A + S-adenosyl-L-homocysteine + 2 H(+). Catalyzes the methylthiolation of N6-(dimethylallyl)adenosine (i(6)A), leading to the formation of 2-methylthio-N6-(dimethylallyl)adenosine (ms(2)i(6)A) at position 37 in tRNAs that read codons beginning with uridine. The polypeptide is tRNA-2-methylthio-N(6)-dimethylallyladenosine synthase (Aliarcobacter butzleri (strain RM4018) (Arcobacter butzleri)).